Consider the following 326-residue polypeptide: Ornithine carbamoyltransferase (326 aa).

Residues 57 to 60 (STRT), Gln84, Arg108, and 135 to 138 (HPTQ) each bind carbamoyl phosphate. Residues Asn169, Asp233, and 237–238 (SM) contribute to the L-ornithine site. 275–276 (CL) serves as a coordination point for carbamoyl phosphate.

The protein belongs to the aspartate/ornithine carbamoyltransferase superfamily. OTCase family.

The protein localises to the cytoplasm. The catalysed reaction is carbamoyl phosphate + L-ornithine = L-citrulline + phosphate + H(+). The protein operates within amino-acid biosynthesis; L-arginine biosynthesis; L-arginine from L-ornithine and carbamoyl phosphate: step 1/3. Reversibly catalyzes the transfer of the carbamoyl group from carbamoyl phosphate (CP) to the N(epsilon) atom of ornithine (ORN) to produce L-citrulline. The protein is Ornithine carbamoyltransferase of Escherichia coli O6:K15:H31 (strain 536 / UPEC).